Reading from the N-terminus, the 280-residue chain is Protein phosphatase 1 regulatory subunit 3B-A (280 aa).

Positions 58 to 61 match the PP1-binding motif motif; sequence RVSF. Residues 121–229 enclose the CBM21 domain; the sequence is RNRLQADSVC…SNKSLNYKIA (109 aa).

In terms of assembly, interacts with glycogen, PPP1CC catalytic subunit of PP1 and PYGL. Associates with glycogen particles. Forms complexes with debranching enzyme, glycogen phosphorylase, glycogen synthase and phosphorylase kinase which is necessary for its regulation of PP1 activity.

Its function is as follows. Acts as a glycogen-targeting subunit for phosphatase PP1. Facilitates interaction of the PP1 with enzymes of the glycogen metabolism and regulates its activity. Suppresses the rate at which PP1 dephosphorylates (inactivates) glycogen phosphorylase and enhances the rate at which it activates glycogen synthase and therefore limits glycogen breakdown. This is Protein phosphatase 1 regulatory subunit 3B-A (ppp1r3b-a) from Xenopus laevis (African clawed frog).